Reading from the N-terminus, the 326-residue chain is Probable iron chelatin transport system permease protein HP_0889 (326 aa).

The next 10 membrane-spanning stretches (helical) occupy residues 7–27 (IALACVILAVVVLLFGGESLS), 64–84 (ILALLVGASLSGSGVVMQTIF), 91–111 (PFLLGISSGAMLGVAMAIAVV), 113–133 (SNIAILAFFGAILASLAVLAM), 142–162 (LSLVLSGVVLSAFLSALAGAI), 164–184 (FFVIPQKAQAIVVWLLGSLSL), 187–207 (YKDCLIAFIGLSLGFIPLFLL), 241–261 (VASALAVSVSGTIGWIGLVIP), 275–295 (LLLSSLLMGAFFLLLADVVAK), and 301–321 (DLPVGIATSVLGAPFFLWLLF).

The protein belongs to the binding-protein-dependent transport system permease family. FecCD subfamily.

The protein localises to the cell inner membrane. Part of a binding-protein-dependent transport system for an iron chelatin; probably responsible for the translocation of the substrate across the membrane. In Helicobacter pylori (strain ATCC 700392 / 26695) (Campylobacter pylori), this protein is Probable iron chelatin transport system permease protein HP_0889.